A 260-amino-acid chain; its full sequence is Thiazole synthase (260 aa).

Lys-102 (schiff-base intermediate with DXP) is an active-site residue. 1-deoxy-D-xylulose 5-phosphate contacts are provided by residues Gly-163, 189–190 (AG), and 211–212 (NT).

The protein belongs to the ThiG family. Homotetramer. Forms heterodimers with either ThiH or ThiS.

Its subcellular location is the cytoplasm. The enzyme catalyses [ThiS sulfur-carrier protein]-C-terminal-Gly-aminoethanethioate + 2-iminoacetate + 1-deoxy-D-xylulose 5-phosphate = [ThiS sulfur-carrier protein]-C-terminal Gly-Gly + 2-[(2R,5Z)-2-carboxy-4-methylthiazol-5(2H)-ylidene]ethyl phosphate + 2 H2O + H(+). Its pathway is cofactor biosynthesis; thiamine diphosphate biosynthesis. Catalyzes the rearrangement of 1-deoxy-D-xylulose 5-phosphate (DXP) to produce the thiazole phosphate moiety of thiamine. Sulfur is provided by the thiocarboxylate moiety of the carrier protein ThiS. In vitro, sulfur can be provided by H(2)S. The chain is Thiazole synthase from Geobacter sulfurreducens (strain ATCC 51573 / DSM 12127 / PCA).